We begin with the raw amino-acid sequence, 351 residues long: SKP1-like protein 21 (351 aa).

An interaction with the F-box domain of F-box proteins region spans residues 108–167; it reads TSAADSLQLKPLVDLTSRALARIIEGKTPEEIREIFHLPDDLTEEEKLEPLKNTMDDPRI. Disordered regions lie at residues 216–240 and 330–351; these read VKTSKSKKKNKKRKEQKNGSSNGTC and VNFSINGNGTSRRLTGPAAGHK. A compositionally biased stretch (basic residues) spans 217–230; that stretch reads KTSKSKKKNKKRKE. Residues 330–342 show a composition bias toward polar residues; it reads VNFSINGNGTSRR.

The protein belongs to the SKP1 family. In terms of assembly, part of a SCF (SKP1-cullin-F-box) protein ligase complex. Expressed in young seedlings, roots, leaves, floral stems, inflorescences, and siliques.

It is found in the nucleus. The protein operates within protein modification; protein ubiquitination. Involved in ubiquitination and subsequent proteasomal degradation of target proteins. Together with CUL1, RBX1 and a F-box protein, it forms a SCF E3 ubiquitin ligase complex. The functional specificity of this complex depends on the type of F-box protein. In the SCF complex, it serves as an adapter that links the F-box protein to CUL1. The chain is SKP1-like protein 21 (ASK21) from Arabidopsis thaliana (Mouse-ear cress).